The following is a 254-amino-acid chain: Triosephosphate isomerase (254 aa).

N10–K12 serves as a coordination point for substrate. H99 functions as the Electrophile in the catalytic mechanism. E169 acts as the Proton acceptor in catalysis. Residues G175, S215, and G236–G237 contribute to the substrate site.

This sequence belongs to the triosephosphate isomerase family. In terms of assembly, homodimer.

Its subcellular location is the cytoplasm. The catalysed reaction is D-glyceraldehyde 3-phosphate = dihydroxyacetone phosphate. It participates in carbohydrate biosynthesis; gluconeogenesis. The protein operates within carbohydrate degradation; glycolysis; D-glyceraldehyde 3-phosphate from glycerone phosphate: step 1/1. Functionally, involved in the gluconeogenesis. Catalyzes stereospecifically the conversion of dihydroxyacetone phosphate (DHAP) to D-glyceraldehyde-3-phosphate (G3P). This Chlamydia felis (strain Fe/C-56) (Chlamydophila felis) protein is Triosephosphate isomerase.